An 82-amino-acid chain; its full sequence is MGREFGNLARIRHVISYSLSPFEQRAFPSYFSKGIPNVLRRTRERILRVAPPFVVVYLIYTWGNQEFEQSKRKNPAMYENDK.

Topologically, residues 1 to 43 (MGREFGNLARIRHVISYSLSPFEQRAFPSYFSKGIPNVLRRTR) are mitochondrial matrix. Residue S16 is modified to Phosphoserine. N6-acetyllysine; alternate is present on K33. K33 is subject to N6-succinyllysine; alternate. Residues 44–62 (ERILRVAPPFVVVYLIYTW) traverse the membrane as a helical segment. The Mitochondrial intermembrane segment spans residues 63-82 (GNQEFEQSKRKNPAMYENDK).

This sequence belongs to the UQCRQ/QCR8 family. Component of the ubiquinol-cytochrome c oxidoreductase (cytochrome b-c1 complex, complex III, CIII), a multisubunit enzyme composed of 11 subunits. The complex is composed of 3 respiratory subunits cytochrome b, cytochrome c1 and Rieske protein UQCRFS1, 2 core protein subunits UQCRC1/QCR1 and UQCRC2/QCR2, and 6 low-molecular weight protein subunits UQCRH/QCR6, UQCRB/QCR7, UQCRQ/QCR8, UQCR10/QCR9, UQCR11/QCR10 and subunit 9, the cleavage product of Rieske protein UQCRFS1. The complex exists as an obligatory dimer and forms supercomplexes (SCs) in the inner mitochondrial membrane with NADH-ubiquinone oxidoreductase (complex I, CI) and cytochrome c oxidase (complex IV, CIV), resulting in different assemblies (supercomplex SCI(1)III(2)IV(1) and megacomplex MCI(2)III(2)IV(2)). Interacts with UQCC6.

The protein localises to the mitochondrion inner membrane. Component of the ubiquinol-cytochrome c oxidoreductase, a multisubunit transmembrane complex that is part of the mitochondrial electron transport chain which drives oxidative phosphorylation. The respiratory chain contains 3 multisubunit complexes succinate dehydrogenase (complex II, CII), ubiquinol-cytochrome c oxidoreductase (cytochrome b-c1 complex, complex III, CIII) and cytochrome c oxidase (complex IV, CIV), that cooperate to transfer electrons derived from NADH and succinate to molecular oxygen, creating an electrochemical gradient over the inner membrane that drives transmembrane transport and the ATP synthase. The cytochrome b-c1 complex catalyzes electron transfer from ubiquinol to cytochrome c, linking this redox reaction to translocation of protons across the mitochondrial inner membrane, with protons being carried across the membrane as hydrogens on the quinol. In the process called Q cycle, 2 protons are consumed from the matrix, 4 protons are released into the intermembrane space and 2 electrons are passed to cytochrome c. The chain is Cytochrome b-c1 complex subunit 8 (Uqcrq) from Mus musculus (Mouse).